Consider the following 336-residue polypeptide: 3-isopropylmalate dehydrogenase (336 aa).

Positions 87, 97, 121, and 211 each coordinate substrate. The Mg(2+) site is built by D211, D235, and D239. 271–283 is an NAD(+) binding site; that stretch reads GSAPDIAGQGVAD.

The protein belongs to the isocitrate and isopropylmalate dehydrogenases family. LeuB type 2 subfamily. Homodimer. Mg(2+) serves as cofactor. Requires Mn(2+) as cofactor.

Its subcellular location is the cytoplasm. The catalysed reaction is (2R,3S)-3-isopropylmalate + NAD(+) = 4-methyl-2-oxopentanoate + CO2 + NADH. It participates in amino-acid biosynthesis; L-leucine biosynthesis; L-leucine from 3-methyl-2-oxobutanoate: step 3/4. Catalyzes the oxidation of 3-carboxy-2-hydroxy-4-methylpentanoate (3-isopropylmalate) to 3-carboxy-4-methyl-2-oxopentanoate. The product decarboxylates to 4-methyl-2 oxopentanoate. The protein is 3-isopropylmalate dehydrogenase of Mycobacterium avium (strain 104).